A 256-amino-acid chain; its full sequence is MSLTIKEIKEKLSRIETLEELHKHEANNDSRKGVINAIKSREKNILKQQALEEHYLSMNQYENNIMSSNRDALICGIDEVGRGPLAGPVVACAVILEKNHHYIGLDDSKKVSPKNRARLNQNLKENVYQYAYGIASSVEIDELNIYRATQLAMLRAINQLDVTPTHLLIDAMTLDIDIPQTSIIKGDAKSVSIAAASIMAKEYRDQYMRQLSKQFPEYGFDKNAGYGTKQHLKAIDQVGIINEHRQSFEPIKSMMK.

In terms of domain architecture, RNase H type-2 spans 72–256 (ALICGIDEVG…SFEPIKSMMK (185 aa)). The a divalent metal cation site is built by aspartate 78, glutamate 79, and aspartate 170.

The protein belongs to the RNase HII family. Mn(2+) is required as a cofactor. Requires Mg(2+) as cofactor.

It is found in the cytoplasm. It carries out the reaction Endonucleolytic cleavage to 5'-phosphomonoester.. Its function is as follows. Endonuclease that specifically degrades the RNA of RNA-DNA hybrids. This chain is Ribonuclease HII, found in Staphylococcus epidermidis (strain ATCC 12228 / FDA PCI 1200).